Consider the following 154-residue polypeptide: Probable chemoreceptor glutamine deamidase CheD (154 aa).

The protein belongs to the CheD family.

It catalyses the reaction L-glutaminyl-[protein] + H2O = L-glutamyl-[protein] + NH4(+). In terms of biological role, probably deamidates glutamine residues to glutamate on methyl-accepting chemotaxis receptors (MCPs), playing an important role in chemotaxis. The polypeptide is Probable chemoreceptor glutamine deamidase CheD (Methanococcus maripaludis (strain C6 / ATCC BAA-1332)).